We begin with the raw amino-acid sequence, 555 residues long: Dihydroxy-acid dehydratase (555 aa).

A Mg(2+)-binding site is contributed by Asp80. Cys121 is a [2Fe-2S] cluster binding site. Asp122 and Lys123 together coordinate Mg(2+). At Lys123 the chain carries N6-carboxylysine. Cys193 lines the [2Fe-2S] cluster pocket. Glu444 contacts Mg(2+). Residue Ser470 is the Proton acceptor of the active site.

It belongs to the IlvD/Edd family. As to quaternary structure, homodimer. The cofactor is [2Fe-2S] cluster. Mg(2+) is required as a cofactor.

The catalysed reaction is (2R)-2,3-dihydroxy-3-methylbutanoate = 3-methyl-2-oxobutanoate + H2O. It carries out the reaction (2R,3R)-2,3-dihydroxy-3-methylpentanoate = (S)-3-methyl-2-oxopentanoate + H2O. Its pathway is amino-acid biosynthesis; L-isoleucine biosynthesis; L-isoleucine from 2-oxobutanoate: step 3/4. It functions in the pathway amino-acid biosynthesis; L-valine biosynthesis; L-valine from pyruvate: step 3/4. Functions in the biosynthesis of branched-chain amino acids. Catalyzes the dehydration of (2R,3R)-2,3-dihydroxy-3-methylpentanoate (2,3-dihydroxy-3-methylvalerate) into 2-oxo-3-methylpentanoate (2-oxo-3-methylvalerate) and of (2R)-2,3-dihydroxy-3-methylbutanoate (2,3-dihydroxyisovalerate) into 2-oxo-3-methylbutanoate (2-oxoisovalerate), the penultimate precursor to L-isoleucine and L-valine, respectively. The chain is Dihydroxy-acid dehydratase from Aquifex aeolicus (strain VF5).